Reading from the N-terminus, the 634-residue chain is Chaperone protein HtpG (634 aa).

Residues methionine 1–arginine 342 form an a; substrate-binding region. Residues glutamate 343–glutamine 559 form a b region. Positions isoleucine 560–alanine 634 are c.

The protein belongs to the heat shock protein 90 family. In terms of assembly, homodimer.

The protein resides in the cytoplasm. Molecular chaperone. Has ATPase activity. In Pseudomonas putida (strain ATCC 47054 / DSM 6125 / CFBP 8728 / NCIMB 11950 / KT2440), this protein is Chaperone protein HtpG.